A 229-amino-acid polypeptide reads, in one-letter code: Large ribosomal subunit protein uL1 (229 aa).

The protein belongs to the universal ribosomal protein uL1 family. In terms of assembly, part of the 50S ribosomal subunit.

Its function is as follows. Binds directly to 23S rRNA. The L1 stalk is quite mobile in the ribosome, and is involved in E site tRNA release. In terms of biological role, protein L1 is also a translational repressor protein, it controls the translation of the L11 operon by binding to its mRNA. This chain is Large ribosomal subunit protein uL1, found in Rhodopseudomonas palustris (strain BisB5).